The following is a 192-amino-acid chain: Fe/S biogenesis protein NfuA (192 aa).

2 residues coordinate [4Fe-4S] cluster: Cys-149 and Cys-152.

The protein belongs to the NfuA family. Homodimer. The cofactor is [4Fe-4S] cluster.

Functionally, involved in iron-sulfur cluster biogenesis. Binds a 4Fe-4S cluster, can transfer this cluster to apoproteins, and thereby intervenes in the maturation of Fe/S proteins. Could also act as a scaffold/chaperone for damaged Fe/S proteins. The sequence is that of Fe/S biogenesis protein NfuA from Proteus mirabilis (strain HI4320).